The primary structure comprises 414 residues: Phosphoglycerate kinase (414 aa).

Residues Val-23, Asp-24, Phe-25, Asn-26, Arg-39, Ser-62, His-63, Gly-65, and Arg-66 each contribute to the (2R)-3-phosphoglycerate site. Position 75 is a phosphotyrosine (Tyr-75). At Ser-76 the chain carries Phosphoserine. (2R)-3-phosphoglycerate is bound by residues Leu-121 and Arg-122. Residue Ser-143 is modified to Phosphoserine. (2R)-3-phosphoglycerate is bound by residues His-168 and Arg-169. A phosphoserine mark is found at Ser-172, Ser-173, and Ser-183. Gly-211 lines the ADP pocket. Gly-211 contributes to the CDP binding site. Ala-212 and Lys-213 together coordinate AMP. Ala-212 lines the ATP pocket. Ala-212 is a Mg(2+) binding site. Positions 215 and 216 each coordinate Mg(2+). Asp-216 contacts CDP. Lys-217 lines the AMP pocket. Residue Lys-217 participates in ATP binding. Residue Gly-235 participates in ADP binding. A CDP-binding site is contributed by Gly-235. AMP is bound at residue Gly-236. An ATP-binding site is contributed by Gly-236. Phosphoserine occurs at positions 253 and 260. Thr-299 is modified (phosphothreonine). Gly-310 provides a ligand contact to AMP. Gly-310 serves as a coordination point for ATP. Ser-328 carries the phosphoserine modification. Residues Gly-335, Ala-337, and Phe-340 each coordinate CDP. Phe-340 provides a ligand contact to ADP. Glu-341 is a binding site for AMP. Residue Glu-341 participates in ATP binding. Phosphoserine is present on Ser-351. The ATP site is built by Asp-372 and Thr-373. Mg(2+) is bound at residue Asp-372. Thr-373 carries the post-translational modification Phosphothreonine. A phosphoserine mark is found at Ser-387, Ser-390, Ser-412, and Ser-413.

Belongs to the phosphoglycerate kinase family. In terms of assembly, monomer. The cofactor is Mg(2+).

Its subcellular location is the cytoplasm. The protein resides in the mitochondrion. It carries out the reaction (2R)-3-phosphoglycerate + ATP = (2R)-3-phospho-glyceroyl phosphate + ADP. Its pathway is carbohydrate degradation; glycolysis; pyruvate from D-glyceraldehyde 3-phosphate: step 2/5. Its function is as follows. Catalyzes one of the two ATP producing reactions in the glycolytic pathway via the reversible conversion of 1,3-diphosphoglycerate to 3-phosphoglycerate. Both L- and D- forms of purine and pyrimidine nucleotides can be used as substrates, but the activity is much lower on pyrimidines. Negatively regulates the biosynthesis of acetyl-CoA from pyruvate in the mitochondrion. In Schizosaccharomyces pombe (strain 972 / ATCC 24843) (Fission yeast), this protein is Phosphoglycerate kinase (pgk1).